A 567-amino-acid polypeptide reads, in one-letter code: Potassium-transporting ATPase potassium-binding subunit (567 aa).

12 helical membrane-spanning segments follow: residues Gly-5–Gly-25, Thr-64–Leu-84, Gly-136–Ile-156, Leu-179–Pro-199, Ile-254–Phe-274, Trp-285–Ala-305, Val-328–Val-350, Ile-375–Phe-395, Met-421–Leu-441, Ile-459–Thr-481, Ile-486–Ile-506, and Leu-529–Ala-549.

The protein belongs to the KdpA family. As to quaternary structure, the system is composed of three essential subunits: KdpA, KdpB and KdpC.

The protein localises to the cell inner membrane. In terms of biological role, part of the high-affinity ATP-driven potassium transport (or Kdp) system, which catalyzes the hydrolysis of ATP coupled with the electrogenic transport of potassium into the cytoplasm. This subunit binds the periplasmic potassium ions and delivers the ions to the membrane domain of KdpB through an intramembrane tunnel. The chain is Potassium-transporting ATPase potassium-binding subunit from Rhizobium rhizogenes (strain K84 / ATCC BAA-868) (Agrobacterium radiobacter).